Here is a 929-residue protein sequence, read N- to C-terminus: Band 3 anion transport protein (929 aa).

The residue at position 1 (Met1) is an N-acetylmethionine. Residues 1–422 are Cytoplasmic-facing; it reads MGDMRDHEEV…LSDITDALSP (422 aa). Ser18 bears the Phosphoserine mark. 2 positions are modified to phosphotyrosine: Tyr31 and Tyr56. A disordered region spans residues 46 to 67; the sequence is ALPTEQTATDYVPSSTSTPHPS. Low complexity predominate over residues 58–67; it reads PSSTSTPHPS. Residues 69 to 303 form a globular region; the sequence is GQVYVELQEL…LGRAAATLMT (235 aa). The tract at residues 190–199 is interaction with ANK1; it reads AVLTRSGGAS. Residues Ser199, Ser222, and Ser363 each carry the phosphoserine modification. Positions 317–370 are dimerization arm; it reads REELLRSLESFLDCSLVLPPTDAPSEKALLNLVPVQKELLRRRYLPSPAKPDPN. The interval 366–389 is disordered; the sequence is KPDPNLYNTLDLNGGKGGPGDEDD. Tyr372 is subject to Phosphotyrosine. Thr374 bears the Phosphothreonine mark. Residues 423–446 form a helical membrane-spanning segment; it reads QVLAAVIFIYFAALSPAVTFGGLL. At 447–454 the chain is on the extracellular side; the sequence is GEKTRNLM. A helical transmembrane segment spans residues 455-475; it reads GVSELLISTAVQGILFALLGA. Topologically, residues 476–478 are cytoplasmic; the sequence is QPL. Residues 479 to 495 form a discontinuously helical membrane-spanning segment; the sequence is LVLGFSGPLLVFEEAFF. At 496–504 the chain is on the extracellular side; it reads SFCESNNLE. The chain crosses the membrane as a helical span at residues 505 to 525; it reads YIVGRAWIGFWLILLVMLVVA. The Cytoplasmic portion of the chain corresponds to 526–537; that stretch reads FEGSFLVQYISR. Residues 538–560 traverse the membrane as a helical segment; it reads YTQEIFSFLISLIFIYETFSKLI. The Extracellular segment spans residues 561–588; it reads KIFQDYPLQQTYAPVVMKPKPQGPVPNT. A helical membrane pass occupies residues 589-609; the sequence is ALFSLVLMAGTFLLAMTLRKF. At 610-620 the chain is on the cytoplasmic side; it reads KNSTYFPGKLR. A helical membrane pass occupies residues 621–641; that stretch reads RVIGDFGVPISILIMVLVDSF. Over 642 to 681 the chain is Extracellular; sequence IKGTYTQKLSVPDGLKVSNSSARGWVIHPLGLYRLFPTWM. The N-linked (GlcNAc...) asparagine glycan is linked to Asn660. Residues 682 to 702 form a helical membrane-spanning segment; the sequence is MFASVLPALLVFILIFLESQI. Topologically, residues 703 to 718 are cytoplasmic; that stretch reads TTLIVSKPERKMIKGS. The chain crosses the membrane as a helical span at residues 719-737; sequence GFHLDLLLVVGMGGVAALF. The discontinuously helical transmembrane segment at 738–755 threads the bilayer; that stretch reads GMPWLSATTVRSVTHANA. Residues 756-778 lie on the Cytoplasmic side of the membrane; it reads LTVMGKASGPGAAAQIQEVKEQR. 2 helical membrane-spanning segments follow: residues 779 to 799 and 800 to 818; these read ISGL…PILS and RIPL…VTSL. The Cytoplasmic segment spans residues 819–856; sequence SGIQLFDRILLLFKPPKYHPDVPFVKRVKTWRMHLFTG. The discontinuously helical intramembrane region spans 857-887; sequence IQIICLAVLWVVKSTPASLALPFVLILTVPL. Residue Cys861 is the site of S-palmitoyl cysteine attachment. Over 888–929 the chain is Cytoplasmic; the sequence is RRLILPLIFRELELQCLDGDDAKVTFDEENGLDEYDEVPMPV. Tyr922 is subject to Phosphotyrosine.

The protein belongs to the anion exchanger (TC 2.A.31) family. A dimer in solution, but in its membrane environment, it exists primarily as a mixture of dimers and tetramers and spans the membrane asymmetrically. Component of the ankyrin-1 complex in the erythrocyte, composed of ANK1, RHCE, RHAG, SLC4A1, EPB42, GYPA, GYPB and AQP1. Interacts with STOM; this interaction positively regulates SLC4A1 activity. Interacts with GYPA; a GYPA monomer is bound at each end of the SLC4A1 dimer forming a heterotetramer. Three SLC4A1 dimers (Band 3-I, Band 3-II and Band 3-III) participates in the ankyrin-1 complex. Interacts (via the cytoplasmic domain) with EPB42; this interaction is mediated by the SLC4A1 Band 3-I dimer. Interacts (via the cytoplasmic domain) directly with ANK1; this interaction is mediated by the SLC4A1 Band 3-II and Band 3-III dimers. In terms of assembly, interacts with TMEM139. Detected in erythrocytes (at protein level).

It localises to the cell membrane. It is found in the basolateral cell membrane. It carries out the reaction hydrogencarbonate(in) + chloride(out) = hydrogencarbonate(out) + chloride(in). Functionally, functions both as a transporter that mediates electroneutral anion exchange across the cell membrane and as a structural protein. Component of the ankyrin-1 complex of the erythrocyte membrane; required for normal flexibility and stability of the erythrocyte membrane and for normal erythrocyte shape via the interactions of its cytoplasmic domain with cytoskeletal proteins, glycolytic enzymes, and hemoglobin. Functions as a transporter that mediates the 1:1 exchange of inorganic anions across the erythrocyte membrane. Mediates chloride-bicarbonate exchange in the kidney, and is required for normal acidification of the urine. The protein is Band 3 anion transport protein of Mus musculus (Mouse).